Consider the following 360-residue polypeptide: Probable cinnamyl alcohol dehydrogenase 9 (360 aa).

C50 serves as a coordination point for Zn(2+). An NADP(+)-binding site is contributed by T52. Zn(2+) contacts are provided by H72, E73, C103, C106, C109, C117, and C166. NADP(+) is bound by residues T170, 191-196, 214-219, T254, G278, and 301-303; these read GLGGLG, SSSSTK, and SDV.

This sequence belongs to the zinc-containing alcohol dehydrogenase family. Homodimer. Requires Zn(2+) as cofactor. In terms of tissue distribution, expressed in the vasculature of the primary root and elongation regions. Expressed in the hypocotyl, cotyledon veins, vasculature of the first rosette leaves, and hydathodes. In stems, expressed in the vascular cambium, interfascicular cambium, developing xylem, and phloem. Expressed in the entire floral organs at late developing stage, and in the abscission, style and stigmatic regions of siliques and seed funicules.

It carries out the reaction (E)-cinnamyl alcohol + NADP(+) = (E)-cinnamaldehyde + NADPH + H(+). Its pathway is aromatic compound metabolism; phenylpropanoid biosynthesis. Functionally, involved in lignin biosynthesis. May catalyze the final step specific for the production of lignin monomers, like coniferyl alcohol, sinapyl alcohol and 4-coumaryl alcohol. This is Probable cinnamyl alcohol dehydrogenase 9 (CAD9) from Arabidopsis thaliana (Mouse-ear cress).